The sequence spans 2178 residues: Toxin A (2178 aa).

Residues 1-93 (MLITREQLMK…RELIKNSRTS (93 aa)) are four-helical bundle. The GT44 domain maps to 98–474 (KNLSFIWIGG…KPEVNSTVFF (377 aa)). The tract at residues 98 to 474 (KNLSFIWIGG…KPEVNSTVFF (377 aa)) is glucosyltransferase region. Positions 98 to 474 (KNLSFIWIGG…KPEVNSTVFF (377 aa)) are N-acetylglucosaminyltransferase region. UDP-N-acetyl-alpha-D-glucosamine-binding positions include 103 to 105 (IWI), Asn141, 267 to 271 (SDILR), and 284 to 286 (DLD). Residues Asp284, Asp286, and Glu520 each coordinate Mg(2+). Residue 523–525 (SSW) coordinates UDP-N-acetyl-alpha-D-glucosamine. Residues 549–806 (NYEDGLNFNK…RVEQLNKVAE (258 aa)) are autoprocessing region. Asn557, Lys607, and Lys651 together coordinate 1D-myo-inositol hexakisphosphate. Residues 574–787 (VNSTKIYENY…QISNKYVVYW (214 aa)) form the Peptidase C80 domain. The For protease activity role is filled by His657. The Nucleophile; for protease activity role is filled by Cys707. 1D-myo-inositol hexakisphosphate-binding positions include 758-759 (KR) and Lys782. The interval 807–1485 (FAKDINSIIQ…VYMEGKIFLN (679 aa)) is translocation region. Cell wall-binding repeat units follow at residues 1799 to 1818 (EYGW…INLI), 1820 to 1839 (KKGY…NTGV), 1870 to 1889 (YTGW…NSKA), 1890 to 1909 (VTGL…NGQM), 1910 to 1929 (QIKW…NTGE), 1931 to 1950 (IIGW…EGRL), 1951 to 1970 (LTGY…NING), 2004 to 2023 (YKGW…DSIA), 2024 to 2043 (VTGS…KTAV), 2045 to 2060 (TNGW…YVSN), 2064 to 2083 (VLGY…STGI), 2114 to 2133 (YTGW…YNSA), 2134 to 2153 (VTGW…KTGA), and 2155 to 2174 (TTGL…KGEQ).

Belongs to the clostridial glucosylating toxin (LCGT) family. Mn(2+) serves as cofactor. The cofactor is Mg(2+). Undergoes autocatalytic cleavage to release the N-terminal part (N-acetylglucosaminyltransferase TcdA), which constitutes the active part of the toxin, in the host cytosol. 1D-myo-inositol hexakisphosphate-binding (InsP6) activates the peptidase C80 domain and promotes autoprocessing.

It is found in the secreted. The protein localises to the host endosome membrane. The protein resides in the host cytoplasm. It localises to the host cytosol. Its subcellular location is the host cell membrane. It catalyses the reaction L-threonyl-[protein] + UDP-N-acetyl-alpha-D-glucosamine = 3-O-(N-acetyl-alpha-D-glucosaminyl)-L-threonyl-[protein] + UDP + H(+). With respect to regulation, protease activity is activated upon binding to 1D-myo-inositol hexakisphosphate (InsP6), which induces conformational reorganization. Precursor of a cytotoxin, which enters into host cells and mediates autoprocessing to release the active toxin (N-acetylglucosaminyltransferase TcdA) into the host cytosol. Once entered into host cells, acidification in the endosome promotes the membrane insertion of the translocation region and formation of a pore, leading to translocation of the GT44 and peptidase C80 domains across the endosomal membrane. This activates the peptidase C80 domain and autocatalytic processing, releasing the N-terminal part (N-acetylglucosaminyltransferase TcdA), which constitutes the active part of the toxin, in the cytosol. In terms of biological role, active form of the toxin, which is released into the host cytosol following autoprocessing and inactivates small GTPases. Acts by mediating monoglycosylation of small GTPases of the Rho family (Rac1, RhoA, RhoG and Cdc42) in host cells at the conserved threonine residue located in the switch I region ('Thr-37/35'), using UDP-N-acetyl-alpha-D-glucosamine as the sugar donor. Monoglycosylation of host small GTPases completely prevents the recognition of the downstream effector, blocking the GTPases in their inactive form, leading to actin cytoskeleton disruption and cell death. This is Toxin A (tcdA) from Clostridium novyi.